Consider the following 1275-residue polypeptide: Myosin-1 (1275 aa).

The region spanning 35-727 is the Myosin motor domain; that stretch reads VGVSDLTLLS…TLFAMEDMRD (693 aa). 128–135 contacts ATP; it reads GESGAGKT. Ser-361 is modified (phosphoserine). Residues 410–493 are actin-binding; sequence TIGILDIYGF…PGLFAALNDS (84 aa). IQ domains lie at 731–751 and 752–777; these read HNMAARIQRAWRRYVKRKEDA and ARLIQNAWKVKKHGNQFEQLRDYGNG. The TH1 domain occupies 785–974; sequence RRRMSMLGSR…KSGTVSVRPG (190 aa). 4 disordered regions span residues 966–1064, 1089–1128, 1183–1230, and 1251–1275; these read SGTV…LNNN, QNHNSNPTAPSRPAKKAAPAPPVKKTAPPPPPSLSAAKPK, SECP…GGLS, and IADALKKRSATRDSDDEEEDDDDDW. Residues 977–992 show a composition bias toward polar residues; it reads PDSQNPKRPRATSSKV. The segment covering 1095–1106 has biased composition (low complexity); sequence PTAPSRPAKKAA. A compositionally biased stretch (pro residues) spans 1107-1121; sequence PAPPVKKTAPPPPPS. Positions 1127–1187 constitute an SH3 domain; that stretch reads PKWPTFKANY…PTAYISECPP (61 aa). Residues 1254 to 1263 show a composition bias toward basic and acidic residues; it reads ALKKRSATRD. Acidic residues predominate over residues 1264–1275; that stretch reads SDDEEEDDDDDW.

The protein belongs to the TRAFAC class myosin-kinesin ATPase superfamily. Myosin family. In terms of processing, phosphorylation of the TEDS site (Ser-361) is required for the polarization of the actin cytoskeleton. Phosphorylation probably activates the myosin-I ATPase activity.

It localises to the cytoplasm. It is found in the cytoskeleton. Its subcellular location is the actin patch. In terms of biological role, type-I myosin implicated in the organization of the actin cytoskeleton. Required for proper actin cytoskeleton polarization. At the cell cortex, assembles in patch-like structures together with proteins from the actin-polymerizing machinery and promotes actin assembly. Functions as actin nucleation-promoting factor (NPF) for the Arp2/3 complex. This is Myosin-1 (MYO1) from Meyerozyma guilliermondii (strain ATCC 6260 / CBS 566 / DSM 6381 / JCM 1539 / NBRC 10279 / NRRL Y-324) (Yeast).